Here is a 539-residue protein sequence, read N- to C-terminus: Sporozoite-associated protein (539 aa).

5 N-linked (GlcNAc...) asparagine glycosylation sites follow: asparagine 31, asparagine 90, asparagine 102, asparagine 149, and asparagine 167. The interval 126-153 is disordered; the sequence is LTQSPPPAAAPQSPSPRAILSPRNVSKT. The segment covering 192–215 has biased composition (low complexity); it reads VVAEKSNTPTTPKTTPNGKWTGKN. The tract at residues 192-231 is disordered; it reads VVAEKSNTPTTPKTTPNGKWTGKNANATIETSNTDHTPPS. Over residues 216-228 the composition is skewed to polar residues; the sequence is ANATIETSNTDHT. 3 N-linked (GlcNAc...) asparagine glycosylation sites follow: asparagine 217, asparagine 271, and asparagine 288. The segment at 303–355 is disordered; it reads TLISRAQDDKPGTKGGSDETSSSTAASNERQPMFPNDNDDDDIDQTYCPGVES. The segment covering 320–332 has biased composition (polar residues); sequence DETSSSTAASNER. Asparagine 427 and asparagine 503 each carry an N-linked (GlcNAc...) asparagine glycan.

Saliva (at protein level). Female salivary gland. Female midgut.

It localises to the secreted. Its function is as follows. Binds heparan sulfate proteoglycans present on the mammalian cell surface. Modulates host immune responses at the site of inoculation via decreasing the expression of TNF-alpha/TNF, IL-1beta/IL1B, IFN-gamma/IFNG, IL4, MMP9, TGF-beta and ICAM1. In terms of biological role, (Microbial infection) Interacts with the surface of Plasmodium berghei sporozoites. Promotes Plasmodium berghei transmission to the mouse host. Does not affect Plasmodium berghei sporozoite viability. Functionally, (Microbial infection) Interacts with the surface of Plasmodium falciparum sporozoites. This Anopheles gambiae (African malaria mosquito) protein is Sporozoite-associated protein.